Consider the following 139-residue polypeptide: 6,7-dimethyl-8-ribityllumazine synthase (139 aa).

5-amino-6-(D-ribitylamino)uracil is bound by residues Phe11, 42–44 (ALE), and 66–68 (VVI). Residue 71-72 (ET) participates in (2S)-2-hydroxy-3-oxobutyl phosphate binding. Residue His74 is the Proton donor of the active site. Asn98 contacts 5-amino-6-(D-ribitylamino)uracil. Arg112 serves as a coordination point for (2S)-2-hydroxy-3-oxobutyl phosphate.

This sequence belongs to the DMRL synthase family.

It catalyses the reaction (2S)-2-hydroxy-3-oxobutyl phosphate + 5-amino-6-(D-ribitylamino)uracil = 6,7-dimethyl-8-(1-D-ribityl)lumazine + phosphate + 2 H2O + H(+). Its pathway is cofactor biosynthesis; riboflavin biosynthesis; riboflavin from 2-hydroxy-3-oxobutyl phosphate and 5-amino-6-(D-ribitylamino)uracil: step 1/2. Functionally, catalyzes the formation of 6,7-dimethyl-8-ribityllumazine by condensation of 5-amino-6-(D-ribitylamino)uracil with 3,4-dihydroxy-2-butanone 4-phosphate. This is the penultimate step in the biosynthesis of riboflavin. This is 6,7-dimethyl-8-ribityllumazine synthase from Zymomonas mobilis subsp. mobilis (strain ATCC 31821 / ZM4 / CP4).